We begin with the raw amino-acid sequence, 292 residues long: Aquaporin-3 (292 aa).

Residues 1 to 24 lie on the Cytoplasmic side of the membrane; it reads MGRQKELMNRCGEMLHIRYRLLRQ. A helical membrane pass occupies residues 25-42; it reads ALAECLGTLILVMFGCGS. Topologically, residues 43-56 are extracellular; sequence VAQVVLSRGTHGGF. Residues 57 to 74 form a helical membrane-spanning segment; sequence LTINLAFGFAVTLAILVA. At 75–78 the chain is on the cytoplasmic side; the sequence is GQVS. An intramembrane region (discontinuously helical) is located at residues 79–92; that stretch reads GAHLNPAVTFAMCF. Residues 83 to 85 carry the NPA 1 motif; it reads NPA. Residues 93–100 are Cytoplasmic-facing; the sequence is LAREPWIK. Residues 101–121 traverse the membrane as a helical segment; it reads LPIYTLAQTLGAFLGAGIVFG. The Extracellular portion of the chain corresponds to 122–159; that stretch reads LYYDAIWAFAGNELVVSGPNGTAGIFATYPSGHLDMVN. An N-linked (GlcNAc...) asparagine glycan is attached at Asn141. A helical membrane pass occupies residues 160-177; that stretch reads GFFDQFIGTAALIVCVLA. Residues 178–189 are Cytoplasmic-facing; it reads IVDPYNNPVPRG. Residues 190–206 traverse the membrane as a helical segment; sequence LEAFTVGLVVLVIGTSM. At 207 to 210 the chain is on the extracellular side; that stretch reads GFNS. The discontinuously helical intramembrane region spans 211–224; that stretch reads GYAVNPARDFGPRL. An NPA 2 motif is present at residues 215-217; the sequence is NPA. At 225 to 242 the chain is on the extracellular side; it reads FTALAGWGSEVFTTGQNW. Residues 243–264 traverse the membrane as a helical segment; it reads WWVPIVSPLLGSIGGVFVYQLM. Residues 265–292 are Cytoplasmic-facing; that stretch reads IGCHLEQPPPSTEAENVKLAHMKHKEQI.

The protein belongs to the MIP/aquaporin (TC 1.A.8) family. As to quaternary structure, homotetramer; each monomer provides an independent glycerol/water pore. Could also exist in other oligomeric states. Detected in kidney medulla and papilla, in collecting duct cells. Detected in colon.

Its subcellular location is the cell membrane. It is found in the basolateral cell membrane. It catalyses the reaction glycerol(in) = glycerol(out). The enzyme catalyses H2O(in) = H2O(out). The catalysed reaction is urea(in) = urea(out). It carries out the reaction H2O2(out) = H2O2(in). Its activity is regulated as follows. Channel activity is inhibited by mercury ions. Aquaglyceroporins form homotetrameric transmembrane channels, with each monomer independently mediating glycerol and water transport across the plasma membrane along their osmotic gradient. Could also be permeable to urea. Also participates in cell permeability to H2O2 and H2O2-mediated signaling. In skin, transports glycerol to the epidermis and stratum corneum, where it maintains hydration, elasticity, and supports lipid biosynthesis for barrier repair. In kidney, contributes to the reabsorption of water, helping the body maintain proper fluid balance. The chain is Aquaporin-3 from Rattus norvegicus (Rat).